A 194-amino-acid chain; its full sequence is dCTP deaminase (194 aa).

DCTP is bound by residues 110 to 115 (RSSLAR), Asp-128, 136 to 138 (VLE), Tyr-171, Lys-178, and Gln-182. The Proton donor/acceptor role is filled by Glu-138. The disordered stretch occupies residues 173–194 (SRQDAKYKNQQSAVASRINQDR). Polar residues predominate over residues 180–194 (KNQQSAVASRINQDR).

It belongs to the dCTP deaminase family. As to quaternary structure, homotrimer.

It catalyses the reaction dCTP + H2O + H(+) = dUTP + NH4(+). It functions in the pathway pyrimidine metabolism; dUMP biosynthesis; dUMP from dCTP (dUTP route): step 1/2. Functionally, catalyzes the deamination of dCTP to dUTP. The chain is dCTP deaminase from Actinobacillus succinogenes (strain ATCC 55618 / DSM 22257 / CCUG 43843 / 130Z).